A 55-amino-acid chain; its full sequence is Large ribosomal subunit protein bL33 (55 aa).

Belongs to the bacterial ribosomal protein bL33 family.

The protein is Large ribosomal subunit protein bL33 of Methylorubrum extorquens (strain CM4 / NCIMB 13688) (Methylobacterium extorquens).